We begin with the raw amino-acid sequence, 224 residues long: Glutathione peroxidase 3 (224 aa).

The first 18 residues, Met1 to Gly18, serve as a signal peptide directing secretion. Asn38 carries an N-linked (GlcNAc...) asparagine glycan. Cys73 is a catalytic residue.

It belongs to the glutathione peroxidase family.

It localises to the secreted. The protein resides in the extracellular space. It carries out the reaction 2 glutathione + H2O2 = glutathione disulfide + 2 H2O. The polypeptide is Glutathione peroxidase 3 (gpx-3) (Caenorhabditis elegans).